Here is a 556-residue protein sequence, read N- to C-terminus: Calcium-dependent protein kinase 5 (556 aa).

A disordered region spans residues 1 to 40; it reads MGNSCRGSFKDKLDEGDNNKPEDYSKTSTTNLSSNSDHSP. G2 carries the N-myristoyl glycine lipid modification. Positions 8–25 are enriched in basic and acidic residues; that stretch reads SFKDKLDEGDNNKPEDYS. Over residues 26 to 39 the composition is skewed to low complexity; sequence KTSTTNLSSNSDHS. Positions 97 to 355 constitute a Protein kinase domain; the sequence is YTLSRKLGQG…AHEVLRHPWI (259 aa). Residues 103 to 111 and K126 contribute to the ATP site; that span reads LGQGQFGTT. The Proton acceptor role is filled by D221. Position 261 is a phosphoserine (S261). An autoinhibitory domain region spans residues 361 to 391; it reads APDRALDPAVLSRLKQFSAMNKLKKMALKVI. 4 EF-hand domains span residues 398-433, 434-469, 470-505, and 509-539; these read EEIA…YGST, LKDT…LNKL, EREE…HGMA, and LEDI…GNAG. The Ca(2+) site is built by D411, D413, S415, E422, D447, D449, S451, T453, E458, D483, D485, S487, E494, D517, N519, D521, K523, and E528.

Belongs to the protein kinase superfamily. Ser/Thr protein kinase family. CDPK subfamily.

Its subcellular location is the membrane. The catalysed reaction is L-seryl-[protein] + ATP = O-phospho-L-seryl-[protein] + ADP + H(+). It carries out the reaction L-threonyl-[protein] + ATP = O-phospho-L-threonyl-[protein] + ADP + H(+). Its activity is regulated as follows. Activated by calcium. Autophosphorylation may play an important role in the regulation of the kinase activity. Functionally, may play a role in signal transduction pathways that involve calcium as a second messenger. This Arabidopsis thaliana (Mouse-ear cress) protein is Calcium-dependent protein kinase 5 (CPK5).